Consider the following 228-residue polypeptide: MTQQEIKLIAFDLDGTLLDSVPDLAVAADQATRAVGFPGVTELQVRDYVGNGADILIGRALSQSLTINPELSDELRAQARELFDDFYQQTGHKLSHLYPTVKETLKELHQAGFTLALVTNKPSKFVPDVLQQHGIADYFVDVLGGDSFPEKKPNPIALNWLMEKHQIQPTEMLMVGDSKNDILAAKNAGCASFGLTYGYNHGEPIAASEPDFVADSLAQLLDVVLVSA.

Residue Asp-12 is the Nucleophile of the active site. Mg(2+) is bound by residues Asp-12, Asp-14, and Asp-177.

It belongs to the HAD-like hydrolase superfamily. CbbY/CbbZ/Gph/YieH family. Requires Mg(2+) as cofactor.

It catalyses the reaction 2-phosphoglycolate + H2O = glycolate + phosphate. Its pathway is organic acid metabolism; glycolate biosynthesis; glycolate from 2-phosphoglycolate: step 1/1. Specifically catalyzes the dephosphorylation of 2-phosphoglycolate. Is involved in the dissimilation of the intracellular 2-phosphoglycolate formed during the DNA repair of 3'-phosphoglycolate ends, a major class of DNA lesions induced by oxidative stress. The chain is Phosphoglycolate phosphatase from Vibrio vulnificus (strain CMCP6).